The primary structure comprises 906 residues: Protein translocase subunit SecA (906 aa).

Residues Q87, 105 to 109, and D507 each bind ATP; that span reads GEGKT. Residues 553 to 563 show a composition bias toward basic and acidic residues; the sequence is RHESRRIDNQL. Disordered regions lie at residues 553–576 and 854–906; these read RHES…PGSS and LEEP…GRLA. Residues C890, C892, C901, and H902 each contribute to the Zn(2+) site. The span at 896-906 shows a compositional bias: basic residues; the sequence is KKYKQCHGRLA.

The protein belongs to the SecA family. Monomer and homodimer. Part of the essential Sec protein translocation apparatus which comprises SecA, SecYEG and auxiliary proteins SecDF-YajC and YidC. Requires Zn(2+) as cofactor.

The protein resides in the cell inner membrane. It is found in the cytoplasm. The catalysed reaction is ATP + H2O + cellular proteinSide 1 = ADP + phosphate + cellular proteinSide 2.. Its function is as follows. Part of the Sec protein translocase complex. Interacts with the SecYEG preprotein conducting channel. Has a central role in coupling the hydrolysis of ATP to the transfer of proteins into and across the cell membrane, serving both as a receptor for the preprotein-SecB complex and as an ATP-driven molecular motor driving the stepwise translocation of polypeptide chains across the membrane. The polypeptide is Protein translocase subunit SecA (Methylococcus capsulatus (strain ATCC 33009 / NCIMB 11132 / Bath)).